Reading from the N-terminus, the 341-residue chain is UDP-3-O-acylglucosamine N-acyltransferase (341 aa).

The Proton acceptor role is filled by histidine 241.

It belongs to the transferase hexapeptide repeat family. LpxD subfamily. As to quaternary structure, homotrimer.

It carries out the reaction a UDP-3-O-[(3R)-3-hydroxyacyl]-alpha-D-glucosamine + a (3R)-hydroxyacyl-[ACP] = a UDP-2-N,3-O-bis[(3R)-3-hydroxyacyl]-alpha-D-glucosamine + holo-[ACP] + H(+). The protein operates within bacterial outer membrane biogenesis; LPS lipid A biosynthesis. Its function is as follows. Catalyzes the N-acylation of UDP-3-O-acylglucosamine using 3-hydroxyacyl-ACP as the acyl donor. Is involved in the biosynthesis of lipid A, a phosphorylated glycolipid that anchors the lipopolysaccharide to the outer membrane of the cell. This is UDP-3-O-acylglucosamine N-acyltransferase from Haemophilus ducreyi (strain 35000HP / ATCC 700724).